Reading from the N-terminus, the 96-residue chain is Co-chaperonin GroES (96 aa).

Belongs to the GroES chaperonin family. Heptamer of 7 subunits arranged in a ring. Interacts with the chaperonin GroEL.

It is found in the cytoplasm. Functionally, together with the chaperonin GroEL, plays an essential role in assisting protein folding. The GroEL-GroES system forms a nano-cage that allows encapsulation of the non-native substrate proteins and provides a physical environment optimized to promote and accelerate protein folding. GroES binds to the apical surface of the GroEL ring, thereby capping the opening of the GroEL channel. The sequence is that of Co-chaperonin GroES from Buchnera aphidicola subsp. Schizaphis graminum (strain Sg).